We begin with the raw amino-acid sequence, 1079 residues long: Spermatogenesis-associated protein 31G1 (1079 aa).

Disordered regions lie at residues 97–145, 261–281, 297–317, 331–362, 376–412, 506–566, 637–678, and 840–975; these read EVEE…GSEG, EDLE…SPSV, GVLS…LEVL, KMPQ…EGGL, EKPQ…RYKP, NLWA…SPPP, VPVF…EQRK, and PHSS…NHPA. Positions 98–113 are enriched in acidic residues; that stretch reads VEEEGEEEEEGEDEAS. Pro residues predominate over residues 336–345; that stretch reads FEPPMPPPCQ. Residues 398–412 show a composition bias toward basic and acidic residues; it reads LQRESSLEDPSRYKP. Composition is skewed to low complexity over residues 551–562 and 645–655; these read NSSASRSPSLAL and SSPSSNSVSKS. Positions 669–678 are enriched in basic and acidic residues; sequence PDGEAVEQRK. A compositionally biased stretch (basic residues) spans 942–951; that stretch reads AKKREHPRKP.

Its function is as follows. Dispensable for normal development and fertility. This is Spermatogenesis-associated protein 31G1 from Homo sapiens (Human).